The primary structure comprises 231 residues: 5'-methylthioadenosine/S-adenosylhomocysteine nucleosidase (231 aa).

The active-site Proton acceptor is the Glu13. Substrate contacts are provided by residues Gly79, Met153, and 174–175; that span reads ME. Asp198 acts as the Proton donor in catalysis.

It belongs to the PNP/UDP phosphorylase family. MtnN subfamily.

It carries out the reaction S-adenosyl-L-homocysteine + H2O = S-(5-deoxy-D-ribos-5-yl)-L-homocysteine + adenine. It catalyses the reaction S-methyl-5'-thioadenosine + H2O = 5-(methylsulfanyl)-D-ribose + adenine. The enzyme catalyses 5'-deoxyadenosine + H2O = 5-deoxy-D-ribose + adenine. It participates in amino-acid biosynthesis; L-methionine biosynthesis via salvage pathway; S-methyl-5-thio-alpha-D-ribose 1-phosphate from S-methyl-5'-thioadenosine (hydrolase route): step 1/2. In terms of biological role, catalyzes the irreversible cleavage of the glycosidic bond in both 5'-methylthioadenosine (MTA) and S-adenosylhomocysteine (SAH/AdoHcy) to adenine and the corresponding thioribose, 5'-methylthioribose and S-ribosylhomocysteine, respectively. Also cleaves 5'-deoxyadenosine, a toxic by-product of radical S-adenosylmethionine (SAM) enzymes, into 5-deoxyribose and adenine. This is 5'-methylthioadenosine/S-adenosylhomocysteine nucleosidase from Halalkalibacterium halodurans (strain ATCC BAA-125 / DSM 18197 / FERM 7344 / JCM 9153 / C-125) (Bacillus halodurans).